The primary structure comprises 132 residues: MENIINYIKWGIVSLGTLFTWIFGAWDIPLITLLVFIFLDYLTGVIKGCKSKELCSNIGLRGITKKGLILVVLLVAVMLDRLLDNGTWMFRTLIAYFYIMNEGISILENCAALGVPIPEKLKQALKQLNNKK.

3 helical membrane-spanning segments follow: residues 19-39, 58-78, and 93-113; these read FTWI…FIFL, IGLR…VAVM, and LIAY…CAAL.

It belongs to the bacteriophage holin family. Cp-1 holin subfamily.

Its subcellular location is the cell membrane. This is an uncharacterized protein from Clostridium perfringens.